The chain runs to 248 residues: Triosephosphate isomerase (248 aa).

9 to 11 serves as a coordination point for substrate; that stretch reads NWK. The active-site Electrophile is the H94. The active-site Proton acceptor is the E166. Residues G172, S211, and 232 to 233 each bind substrate; that span reads GG.

The protein belongs to the triosephosphate isomerase family. Homodimer.

It localises to the cytoplasm. It catalyses the reaction D-glyceraldehyde 3-phosphate = dihydroxyacetone phosphate. It participates in carbohydrate biosynthesis; gluconeogenesis. It functions in the pathway carbohydrate degradation; glycolysis; D-glyceraldehyde 3-phosphate from glycerone phosphate: step 1/1. Its function is as follows. Involved in the gluconeogenesis. Catalyzes stereospecifically the conversion of dihydroxyacetone phosphate (DHAP) to D-glyceraldehyde-3-phosphate (G3P). The sequence is that of Triosephosphate isomerase from Herminiimonas arsenicoxydans.